Consider the following 540-residue polypeptide: Putative actin-fragmin kinase DDB_G0287957 (540 aa).

Residues 27 to 68 adopt a coiled-coil conformation; sequence KNENLNIKNEILNNNNNNNNNKNNNNNNNNNNNIENNSKNEN. Disordered stretches follow at residues 37-70 and 317-341; these read ILNN…ENFN and NNNN…INNC.

It belongs to the protein kinase superfamily. AFK Ser/Thr protein kinase family.

This chain is Putative actin-fragmin kinase DDB_G0287957, found in Dictyostelium discoideum (Social amoeba).